A 141-amino-acid chain; its full sequence is Small ribosomal subunit protein bS16 (141 aa).

Polar residues-rich tracts occupy residues 89 to 101 (NVSVSHAESTEAI) and 109 to 129 (ATANTESNEVSDSESTATATI). The segment at 89–141 (NVSVSHAESTEAITNAEPIQATANTESNEVSDSESTATATIRESEEQPPISES) is disordered.

Belongs to the bacterial ribosomal protein bS16 family.

The chain is Small ribosomal subunit protein bS16 from Trichodesmium erythraeum (strain IMS101).